The chain runs to 268 residues: MALVVKGKVNINEFIDLTKMEKILPSMFTPVKSVMCSKVDKIMVHENESLSEVNLLKGVKLIDSGYVCLAGLVVTGEWNLPDNCRGGVSVCLVDKRMERADEATLGSYYTAAAKKRFQFKVVPNYAITTQDAMKNVWQVLVNIRNVKMSAGFCPLSLEFVSVCIVYRNNIKLGLREKITNVRDGGPMELTEEVVDEFMEDVPMSIRLAKFRSRTGKKSDVRKGKNSSSVRSVPNKNYRNVKDFGGMSFKKNNLIDDDSEATVAESDSF.

The disordered stretch occupies residues 216–238 (KKSDVRKGKNSSSVRSVPNKNYR). A compositionally biased stretch (polar residues) spans 225 to 237 (NSSSVRSVPNKNY).

Belongs to the tobamovirus movement protein family. Binds to host RBCS at the plasmodesmata; this interaction seems required for viral systemic movement. In resistant plants, interacts with host MBP2C at host microtubules; this interaction prevents virus cell to cell movement. In resistant plants, interacts with host resistance (R) protein (e.g. tomato ToMV resistance protein TM-2(2), AC Q71BG9) at the host plasma membrane; this interaction triggers host defense responses leading to programmed cell death.

It is found in the host cytoplasm. The protein resides in the host cytoskeleton. Its subcellular location is the host cell junction. The protein localises to the host plasmodesma. Transports viral genome to neighboring plant cells directly through plasmosdesmata, without any budding. The movement protein allows efficient cell to cell propagation, by bypassing the host cell wall barrier. Forms a ribonucleoprotein complex with viral RNA. Binds microtubules and modulates microtubule stability. Can bind double-stranded DNA. Triggers host hypersensitive defense reaction in incompatible plants harboring resistance (R) proteins. This is Movement protein (MP) from Nicotiana tabacum (Common tobacco).